The primary structure comprises 478 residues: GTPase Obg (478 aa).

In terms of domain architecture, Obg spans 2–159 (TTFVDRVELH…QDIHLELKTV (158 aa)). The interval 60–88 (YHHSPHRKATNGKPGEGGNRSGKDGQDLV) is disordered. The OBG-type G domain maps to 160–330 (ADVALVGYPS…LSFALAELVA (171 aa)). GTP is bound by residues 166–173 (GYPSAGKS), 191–195 (FTTLV), 212–215 (DVPG), 282–285 (NKID), and 311–313 (SAV). The Mg(2+) site is built by Ser173 and Thr193. The OCT domain maps to 348–430 (PKAVDDAGFT…DNAVVFDWEP (83 aa)). Positions 438-478 (MLGRRGEDHRFEAPRPAAQRRRDRDAERDEAQQEFDGFEPF) are disordered. Basic and acidic residues-rich tracts occupy residues 439-450 (LGRRGEDHRFEA) and 457-468 (RRRDRDAERDEA). Acidic residues predominate over residues 469 to 478 (QQEFDGFEPF).

This sequence belongs to the TRAFAC class OBG-HflX-like GTPase superfamily. OBG GTPase family. In terms of assembly, monomer. Mg(2+) serves as cofactor.

Its subcellular location is the cytoplasm. The protein localises to the cell membrane. Functionally, plays an unknown essential role and a regulatory role in sporulation. Overexpression suppresses sporulation although cell growth rate was not reduced. Impaired differentiation was eliminated by addition of decoyinine, an inhibitor of GMP synthesis. Overexpression has no effect on undecylprodigiosin production, but decreases actinorhodin production. An essential GTPase which binds GTP, GDP and possibly (p)ppGpp with moderate affinity, with high nucleotide exchange rates and a fairly low GTP hydrolysis rate. Plays a role in control of the cell cycle, stress response, ribosome biogenesis and in those bacteria that undergo differentiation, in morphogenesis control. The protein is GTPase Obg of Streptomyces coelicolor (strain ATCC BAA-471 / A3(2) / M145).